Reading from the N-terminus, the 130-residue chain is MAKVPSRSPRKRVRKQVADGMAHIHASFNNTIVTITDRQGNALSWATAGGSGFRGSRKSTPFAAQVAAERAGVAAQDYGLKNLEVFVKGPGPGRESAIRALNAVGYKITNITDVTPIPHNGCRPPKKRRV.

Belongs to the universal ribosomal protein uS11 family. In terms of assembly, part of the 30S ribosomal subunit. Interacts with proteins S7 and S18. Binds to IF-3.

Located on the platform of the 30S subunit, it bridges several disparate RNA helices of the 16S rRNA. Forms part of the Shine-Dalgarno cleft in the 70S ribosome. The polypeptide is Small ribosomal subunit protein uS11 (Shewanella amazonensis (strain ATCC BAA-1098 / SB2B)).